Reading from the N-terminus, the 158-residue chain is Siroheme decarboxylase beta subunit (158 aa).

This sequence belongs to the Ahb/Nir family. As to quaternary structure, forms a heterodimer composed of AhbA and AhbB.

The catalysed reaction is siroheme + 2 H(+) = 12,18-didecarboxysiroheme + 2 CO2. The protein operates within porphyrin-containing compound metabolism; protoheme biosynthesis. In terms of biological role, involved in siroheme-dependent heme b biosynthesis. Catalyzes the decarboxylation of siroheme into didecarboxysiroheme. In Oleidesulfovibrio alaskensis (strain ATCC BAA-1058 / DSM 17464 / G20) (Desulfovibrio alaskensis), this protein is Siroheme decarboxylase beta subunit.